We begin with the raw amino-acid sequence, 1404 residues long: DNA-directed RNA polymerase subunit beta' (1404 aa).

Zn(2+) contacts are provided by cysteine 70, cysteine 72, cysteine 85, and cysteine 88. Mg(2+)-binding residues include aspartate 460, aspartate 462, and aspartate 464. The Zn(2+) site is built by cysteine 814, cysteine 889, cysteine 896, and cysteine 899. The interval 1377-1404 is disordered; the sequence is DSEMETLSGKPAAAEPVAAVADAGADEE. Positions 1387–1404 are enriched in low complexity; it reads PAAAEPVAAVADAGADEE.

This sequence belongs to the RNA polymerase beta' chain family. As to quaternary structure, the RNAP catalytic core consists of 2 alpha, 1 beta, 1 beta' and 1 omega subunit. When a sigma factor is associated with the core the holoenzyme is formed, which can initiate transcription. Mg(2+) serves as cofactor. The cofactor is Zn(2+).

The catalysed reaction is RNA(n) + a ribonucleoside 5'-triphosphate = RNA(n+1) + diphosphate. DNA-dependent RNA polymerase catalyzes the transcription of DNA into RNA using the four ribonucleoside triphosphates as substrates. This is DNA-directed RNA polymerase subunit beta' from Xanthomonas euvesicatoria pv. vesicatoria (strain 85-10) (Xanthomonas campestris pv. vesicatoria).